Consider the following 115-residue polypeptide: Cyclin-dependent protein kinase inhibitor SMR3 (115 aa).

Basic and acidic residues predominate over residues Lys17–Pro36. The tract at residues Lys17–Thr82 is disordered. Residues Arg67–Leu81 show a composition bias toward basic residues.

In terms of assembly, interacts with CDKA-1 and D-type cyclins. In terms of tissue distribution, expressed at low levels in roots and stems.

The protein resides in the nucleus. Its function is as follows. Probable cyclin-dependent protein kinase (CDK) inhibitor that functions as a repressor of mitosis in the endoreduplication cell cycle. In Arabidopsis thaliana (Mouse-ear cress), this protein is Cyclin-dependent protein kinase inhibitor SMR3.